A 282-amino-acid chain; its full sequence is Putative phosphatase MPN_383 (282 aa).

The active-site Nucleophile is the aspartate 11. A Mg(2+)-binding site is contributed by aspartate 11. Leucine 12 provides a ligand contact to phosphate. Aspartate 13 provides a ligand contact to Mg(2+). Phosphate-binding positions include 45–46 (TG) and lysine 207. Mg(2+) is bound at residue aspartate 230. Position 233 (asparagine 233) interacts with phosphate.

Belongs to the HAD-like hydrolase superfamily. Cof family. Mg(2+) is required as a cofactor.

The chain is Putative phosphatase MPN_383 from Mycoplasma pneumoniae (strain ATCC 29342 / M129 / Subtype 1) (Mycoplasmoides pneumoniae).